Consider the following 246-residue polypeptide: MRYQVDTHTHTLASSHAYSTIHDYIAEAKRKGIVLFATTDHGPDMADAPHAWHFINSRVIPRMVDGVGILRGIEANIKDEFGEIDCNEKMLNELDIVLAGFHEQVFAPKDRDTNTRAMINAMKKGLVHVITHPGNPKFPVDIHAIAEAAAKYNVALEINNSSFLHSRVGSDVNCTAIAKAVRDAGGWVSMGSDSHIAYSLGDLEMSQAILDDVDFPADRVLNRSPRVLLDFLESRGKPHIPEFAGL.

Residues His-8, His-10, His-16, His-41, Glu-74, His-102, His-132, Asp-193, and His-195 each contribute to the Zn(2+) site.

This sequence belongs to the PHP family. The cofactor is Zn(2+).

This Tolumonas auensis (strain DSM 9187 / NBRC 110442 / TA 4) protein is Probable phosphatase Tola_0828.